The chain runs to 449 residues: Phosphoglucosamine mutase (449 aa).

The Phosphoserine intermediate role is filled by Ser-101. 4 residues coordinate Mg(2+): Ser-101, Asp-243, Asp-245, and Asp-247. At Ser-101 the chain carries Phosphoserine.

This sequence belongs to the phosphohexose mutase family. Mg(2+) serves as cofactor. Activated by phosphorylation.

The catalysed reaction is alpha-D-glucosamine 1-phosphate = D-glucosamine 6-phosphate. In terms of biological role, catalyzes the conversion of glucosamine-6-phosphate to glucosamine-1-phosphate. The chain is Phosphoglucosamine mutase from Syntrophobacter fumaroxidans (strain DSM 10017 / MPOB).